We begin with the raw amino-acid sequence, 358 residues long: Ion-translocating oxidoreductase complex subunit D (358 aa).

Transmembrane regions (helical) follow at residues 19-39 (IMLWVILAMMPAFFTQIYYFG), 41-61 (GVVLQSALAIGTAIIAEFIAI), 79-99 (LTALILAMAIPPYAPYWVIII), and 125-145 (IGYVILLISFPLQMTTWMPPI). Thr-186 carries the FMN phosphoryl threonine modification. 5 consecutive transmembrane segments (helical) span residues 220–240 (FAQGWWQINVAFLAGGIFLIL), 248–268 (IPVAMLVTFFCLATATAFTGF), 271–291 (LSAISQLVSGAMMFGAFFIAT), 297–317 (SITPRGKIIFGALVGLFVYLI), and 321–341 (GNYPDGVAFAILLSNICVPLI).

This sequence belongs to the NqrB/RnfD family. In terms of assembly, the complex is composed of six subunits: RnfA, RnfB, RnfC, RnfD, RnfE and RnfG. FMN serves as cofactor.

The protein resides in the cell inner membrane. Its function is as follows. Part of a membrane-bound complex that couples electron transfer with translocation of ions across the membrane. In Haemophilus influenzae (strain PittGG), this protein is Ion-translocating oxidoreductase complex subunit D.